A 341-amino-acid chain; its full sequence is Adenine deaminase (341 aa).

His-24, His-26, and His-204 together coordinate Zn(2+). The active-site Proton donor is the Glu-207. Asp-285 is a Zn(2+) binding site. Asp-286 is a substrate binding site.

The protein belongs to the metallo-dependent hydrolases superfamily. Adenosine and AMP deaminases family. Adenine deaminase type 2 subfamily. Zn(2+) is required as a cofactor.

It carries out the reaction adenine + H2O + H(+) = hypoxanthine + NH4(+). Catalyzes the hydrolytic deamination of adenine to hypoxanthine. Plays an important role in the purine salvage pathway and in nitrogen catabolism. The sequence is that of Adenine deaminase from Sphingopyxis alaskensis (strain DSM 13593 / LMG 18877 / RB2256) (Sphingomonas alaskensis).